The following is a 513-amino-acid chain: Activin receptor type-2A (513 aa).

Residues 1 to 19 (MGAAAKLAFAVFLISCSSG) form the signal peptide. Residues 20–135 (AILGRSETQE…TSNPVTPKPP (116 aa)) lie on the Extracellular side of the membrane. Cystine bridges form between C30–C60, C50–C78, C85–C104, C91–C103, and C105–C110. Residues N43 and N66 are each glycosylated (N-linked (GlcNAc...) asparagine). A helical membrane pass occupies residues 136–161 (YYNILLYSLVPLMLIAGIVICAFWVY). Topologically, residues 162-513 (RHHKMAYPPV…VDFPPKESSL (352 aa)) are cytoplasmic. Positions 192–485 (LQLLEVKARG…GERITQMQRL (294 aa)) constitute a Protein kinase domain. Residues 198–206 (KARGRFGCV) and K219 each bind ATP. D322 (proton acceptor) is an active-site residue.

The protein belongs to the protein kinase superfamily. TKL Ser/Thr protein kinase family. TGFB receptor subfamily. As to quaternary structure, part of a complex consisting of MAGI2/ARIP1, ACVR2A, ACVR1B and SMAD3. Interacts with MAGI2/ARIP1. Interacts with type I receptor ACVR1. Interacts with BMP7. Interacts with TSC22D1/TSC-22. Interacts with activin A/INHBA. Requires Mg(2+) as cofactor. It depends on Mn(2+) as a cofactor.

It is found in the cell membrane. The catalysed reaction is L-threonyl-[receptor-protein] + ATP = O-phospho-L-threonyl-[receptor-protein] + ADP + H(+). It catalyses the reaction L-seryl-[receptor-protein] + ATP = O-phospho-L-seryl-[receptor-protein] + ADP + H(+). Functionally, on ligand binding, forms a receptor complex consisting of two type II and two type I transmembrane serine/threonine kinases. Type II receptors phosphorylate and activate type I receptors which autophosphorylate, then bind and activate SMAD transcriptional regulators. Receptor for activin A, activin B and inhibin A. Mediates induction of adipogenesis by GDF6. This chain is Activin receptor type-2A (ACVR2A), found in Bos taurus (Bovine).